Here is a 317-residue protein sequence, read N- to C-terminus: Porphobilinogen deaminase (317 aa).

Cysteine 245 is modified (S-(dipyrrolylmethanemethyl)cysteine).

This sequence belongs to the HMBS family. Monomer. It depends on dipyrromethane as a cofactor.

It catalyses the reaction 4 porphobilinogen + H2O = hydroxymethylbilane + 4 NH4(+). It functions in the pathway porphyrin-containing compound metabolism; protoporphyrin-IX biosynthesis; coproporphyrinogen-III from 5-aminolevulinate: step 2/4. Its pathway is porphyrin-containing compound metabolism; chlorophyll biosynthesis. In terms of biological role, tetrapolymerization of the monopyrrole PBG into the hydroxymethylbilane pre-uroporphyrinogen in several discrete steps. The protein is Porphobilinogen deaminase of Prochlorococcus marinus (strain MIT 9313).